We begin with the raw amino-acid sequence, 70 residues long: Beta sliding clamp (70 aa).

This sequence belongs to the beta sliding clamp family. As to quaternary structure, forms a ring-shaped head-to-tail homodimer around DNA which binds and tethers DNA polymerases and other proteins to the DNA. The DNA replisome complex has a single clamp-loading complex (3 tau and 1 each of delta, delta', psi and chi subunits) which binds 3 Pol III cores (1 core on the leading strand and 2 on the lagging strand) each with a beta sliding clamp dimer. Additional proteins in the replisome are other copies of gamma, psi and chi, Ssb, DNA helicase and RNA primase.

The protein localises to the cytoplasm. In terms of biological role, confers DNA tethering and processivity to DNA polymerases and other proteins. Acts as a clamp, forming a ring around DNA (a reaction catalyzed by the clamp-loading complex) which diffuses in an ATP-independent manner freely and bidirectionally along dsDNA. Initially characterized for its ability to contact the catalytic subunit of DNA polymerase III (Pol III), a complex, multichain enzyme responsible for most of the replicative synthesis in bacteria; Pol III exhibits 3'-5' exonuclease proofreading activity. The beta chain is required for initiation of replication as well as for processivity of DNA replication. The sequence is that of Beta sliding clamp (dnaN) from Rhodobacter capsulatus (Rhodopseudomonas capsulata).